Here is a 110-residue protein sequence, read N- to C-terminus: Phosphoribosyl-ATP pyrophosphatase (110 aa).

This sequence belongs to the PRA-PH family.

The protein resides in the cytoplasm. The enzyme catalyses 1-(5-phospho-beta-D-ribosyl)-ATP + H2O = 1-(5-phospho-beta-D-ribosyl)-5'-AMP + diphosphate + H(+). It functions in the pathway amino-acid biosynthesis; L-histidine biosynthesis; L-histidine from 5-phospho-alpha-D-ribose 1-diphosphate: step 2/9. The sequence is that of Phosphoribosyl-ATP pyrophosphatase from Clostridium botulinum (strain ATCC 19397 / Type A).